The chain runs to 93 residues: Phosphoribosyl-ATP pyrophosphatase (93 aa).

This sequence belongs to the PRA-PH family.

It is found in the cytoplasm. The catalysed reaction is 1-(5-phospho-beta-D-ribosyl)-ATP + H2O = 1-(5-phospho-beta-D-ribosyl)-5'-AMP + diphosphate + H(+). It functions in the pathway amino-acid biosynthesis; L-histidine biosynthesis; L-histidine from 5-phospho-alpha-D-ribose 1-diphosphate: step 2/9. In Mycobacterium sp. (strain JLS), this protein is Phosphoribosyl-ATP pyrophosphatase.